The chain runs to 222 residues: 7-cyano-7-deazaguanine synthase (222 aa).

ATP is bound at residue 7–17; it reads LSGGLDSSTVL. Zn(2+) is bound by residues Cys-191, Cys-199, Cys-202, and Cys-205.

The protein belongs to the QueC family. The cofactor is Zn(2+).

The catalysed reaction is 7-carboxy-7-deazaguanine + NH4(+) + ATP = 7-cyano-7-deazaguanine + ADP + phosphate + H2O + H(+). It functions in the pathway purine metabolism; 7-cyano-7-deazaguanine biosynthesis. In terms of biological role, catalyzes the ATP-dependent conversion of 7-carboxy-7-deazaguanine (CDG) to 7-cyano-7-deazaguanine (preQ(0)). The chain is 7-cyano-7-deazaguanine synthase from Trichodesmium erythraeum (strain IMS101).